Here is a 701-residue protein sequence, read N- to C-terminus: Elongation factor G 1 (701 aa).

Residues 8–290 enclose the tr-type G domain; it reads VRYRNIGICA…AVVEYLPAPT (283 aa). Residues 17-24, 88-92, and 142-145 contribute to the GTP site; these read AHVDAGKT, DTPGH, and NKMD.

It belongs to the TRAFAC class translation factor GTPase superfamily. Classic translation factor GTPase family. EF-G/EF-2 subfamily.

It is found in the cytoplasm. Catalyzes the GTP-dependent ribosomal translocation step during translation elongation. During this step, the ribosome changes from the pre-translocational (PRE) to the post-translocational (POST) state as the newly formed A-site-bound peptidyl-tRNA and P-site-bound deacylated tRNA move to the P and E sites, respectively. Catalyzes the coordinated movement of the two tRNA molecules, the mRNA and conformational changes in the ribosome. The sequence is that of Elongation factor G 1 from Saccharophagus degradans (strain 2-40 / ATCC 43961 / DSM 17024).